The chain runs to 646 residues: Probable lysosomal cobalamin transporter (646 aa).

5 consecutive transmembrane segments (helical) span residues 11-31 (LIWV…VITT), 42-62 (IAVS…VFLL), 102-122 (TLYT…YFWF), 149-169 (LGFV…PAAG), and 193-213 (ALTF…ILYT). An N-linked (GlcNAc...) asparagine glycan is attached at asparagine 297. A run of 2 helical transmembrane segments spans residues 317-337 (LLGG…MLIT) and 380-400 (ILMA…LATI). Disordered regions lie at residues 459–588 (QPAA…PPRR) and 603–623 (VGRA…DKKE). Low complexity-rich tracts occupy residues 460-490 (PAAA…SPAA) and 517-543 (PSTS…RTPR). Asparagine 545 carries N-linked (GlcNAc...) asparagine glycosylation. The segment covering 565–582 (APAAALARPGAISPAAPR) has biased composition (low complexity). An N-linked (GlcNAc...) asparagine glycan is attached at asparagine 626.

Belongs to the LIMR family. LMBRD1 subfamily.

The protein localises to the lysosome membrane. In terms of biological role, probable lysosomal cobalamin transporter. Required to export cobalamin from lysosomes allowing its conversion to cofactors. The polypeptide is Probable lysosomal cobalamin transporter (Chaetomium globosum (strain ATCC 6205 / CBS 148.51 / DSM 1962 / NBRC 6347 / NRRL 1970) (Soil fungus)).